Consider the following 1178-residue polypeptide: Integrin alpha-2 (1178 aa).

The N-terminal stretch at 1–26 (MGPGQAGGALLLRLLMLVQGILNCLA) is a signal peptide. Residues 27–1129 (YNVGLPGAKI…KPTEKAEVPT (1103 aa)) lie on the Extracellular side of the membrane. FG-GAP repeat units lie at residues 31 to 89 (LPGA…TATC) and 98 to 158 (ASIS…FLTS). A disulfide bridge links Cys-80 with Cys-89. N-linked (GlcNAc...) asparagine glycosylation is found at Asn-102 and Asn-109. The VWFA domain maps to 185–362 (WEAVKNFLVK…TLGEQIFSIE (178 aa)). FG-GAP repeat units lie at residues 363–417 (GTVQ…VIFP), 420–472 (AFDQ…KQGN), 474–536 (TVIQ…ILNQ), 537–595 (HQFL…TIRT), and 601–661 (ILGS…FTPD). Residues Asn-429, Asn-457, and Asn-472 are each glycosylated (N-linked (GlcNAc...) asparagine). Residues 480–482 (RGD) carry the Cell attachment site motif. Ca(2+) is bound by residues Asp-496, Asp-498, Asp-500, Asp-504, Asp-560, Asn-562, Asp-564, Asp-568, Asp-624, Asn-626, Asp-628, and Asp-632. Cystine bridges form between Cys-677–Cys-734, Cys-786–Cys-792, Cys-862–Cys-873, Cys-1016–Cys-1047, and Cys-1052–Cys-1057. N-linked (GlcNAc...) asparagine glycosylation is present at Asn-696. Asn-1054, Asn-1071, and Asn-1078 each carry an N-linked (GlcNAc...) asparagine glycan. The helical transmembrane segment at 1130-1151 (GVIIGSIIAGILLLLAMTAGLW) threads the bilayer. Residues 1152 to 1178 (KLGFFKRQYKKMGQNPDEMDETTELNS) lie on the Cytoplasmic side of the membrane. The GFFKR motif motif lies at 1154–1158 (GFFKR).

Belongs to the integrin alpha chain family. In terms of assembly, heterodimer of an alpha and a beta subunit. Alpha-2 associates with beta-1. Interacts with HPS5 and RAB21.

It localises to the membrane. Its function is as follows. Integrin alpha-2/beta-1 is a collagen receptor, being responsible for adhesion of platelets and other cells to collagens, modulation of collagen and collagenase gene expression, force generation and organization of newly synthesized extracellular matrix. It is also a receptor for laminins, collagen C-propeptides and E-cadherin. Mice homozygous for a null mutation in the alpha-2 die very early in embryogenesis. The chain is Integrin alpha-2 (Itga2) from Mus musculus (Mouse).